A 350-amino-acid chain; its full sequence is F(420)H(2) dehydrogenase subunit H (350 aa).

8 helical membrane-spanning segments follow: residues Gly-21 to Ile-41, Val-94 to Ile-114, Ile-128 to Ala-148, Pro-173 to Ile-193, Phe-200 to Ala-220, Ile-261 to Val-281, Gly-288 to Ile-308, and Leu-330 to Ala-350.

It belongs to the complex I subunit 1 family. In terms of assembly, the FPO complex is composed of at least 13 different subunits. FpoA, FpoH, FpoJ, FpoK, FpoL, FpoM and FpoN proteins constitute the membrane sector of the complex.

It is found in the cell membrane. The enzyme catalyses methanophenazine + reduced coenzyme F420-(gamma-L-Glu)(n) = dihydromethanophenazine + oxidized coenzyme F420-(gamma-L-Glu)(n) + H(+). In terms of biological role, component of the F(420)H(2) dehydrogenase (FPO complex) which is part of the energy-conserving F(420)H(2):heterodisulfide oxidoreductase system. The membrane-bound electron transfer system of the complex plays an important role in the metabolism of methylotrophic methanogens when the organisms grow on methanol or methylamines. Catalyzes the oxidation of methanophenazine to dihydromethanophenazine. It shuttles electrons from F(420)H(2), via FAD and iron-sulfur (Fe-S) centers, to methanophenazine (an electron carrier in the membrane). It couples the redox reaction to proton translocation (for every two electrons transferred, two hydrogen ions are translocated across the cytoplasmic membrane), and thus conserves the redox energy in a proton gradient. It also catalyzes the oxidation of F(420)H(2) with quinones such as 2,3-dimethyl-1,4-naphthoquinone, 2-methyl-1,4-naphthoquinone and tetramethyl-p-benzoquinone. This Methanosarcina mazei (strain ATCC BAA-159 / DSM 3647 / Goe1 / Go1 / JCM 11833 / OCM 88) (Methanosarcina frisia) protein is F(420)H(2) dehydrogenase subunit H.